The following is a 367-amino-acid chain: Oleoyl-acyl carrier protein thioesterase 2, chloroplastic (367 aa).

The N-terminal 48 residues, M1 to S48, are a transit peptide targeting the chloroplast. Residues N263, H265, and C300 contribute to the active site.

The protein belongs to the acyl-ACP thioesterase family.

The protein resides in the plastid. The protein localises to the chloroplast. The catalysed reaction is (9Z)-octadecenoyl-[ACP] + H2O = (9Z)-octadecenoate + holo-[ACP] + H(+). In terms of biological role, plays an essential role in chain termination during de novo fatty acid synthesis. Possesses high thioesterase activity for oleoyl-ACP versus other acyl-ACPs. This Arabidopsis thaliana (Mouse-ear cress) protein is Oleoyl-acyl carrier protein thioesterase 2, chloroplastic (FATA2).